Here is a 493-residue protein sequence, read N- to C-terminus: Alpha-amylase-related protein (493 aa).

An N-terminal signal peptide occupies residues 1 to 19; that stretch reads MFKFALTLTLCLAGSLSLA. Gln-20 is modified (pyrrolidone carboxylic acid). An intrachain disulfide couples Cys-47 to Cys-103. Ca(2+) contacts are provided by Asn-117, Gln-168, and Asp-177. Cys-156 and Cys-170 are joined by a disulfide. Chloride is bound at residue Arg-205. Asp-207 (nucleophile) is an active-site residue. His-211 contacts Ca(2+). Glu-244 serves as the catalytic Proton donor. 2 residues coordinate chloride: Asn-307 and Arg-342. Disulfide bonds link Cys-375-Cys-381, Cys-417-Cys-440, and Cys-447-Cys-459.

It belongs to the glycosyl hydrolase 13 family. In terms of assembly, monomer. Requires Ca(2+) as cofactor. The cofactor is chloride.

It localises to the secreted. The enzyme catalyses Endohydrolysis of (1-&gt;4)-alpha-D-glucosidic linkages in polysaccharides containing three or more (1-&gt;4)-alpha-linked D-glucose units.. The sequence is that of Alpha-amylase-related protein (Amyrel) from Drosophila sechellia (Fruit fly).